Here is a 495-residue protein sequence, read N- to C-terminus: UDP-glycosyltransferase 73C11 (495 aa).

Histidine 24 acts as the Proton acceptor in catalysis. An an anthocyanidin-binding site is contributed by histidine 24. Aspartate 129 functions as the Charge relay in the catalytic mechanism. Positions 358, 373, 376, 377, 378, and 381 each coordinate UDP-alpha-D-glucose. Glycine 396 provides a ligand contact to an anthocyanidin. Positions 397 and 398 each coordinate UDP-alpha-D-glucose.

The protein belongs to the UDP-glycosyltransferase family.

The enzyme catalyses oleanolate + UDP-alpha-D-glucose = oleanolate 3-O-beta-D-glucoside + UDP + H(+). Catalyzes the transfer of a glucose (Glc) moiety from UDP-Glc to the C-3 position of the oleanane sapogenins oleanolate and hederagenin, and to the C-28 carboxylic group of the lupane sapogenin betulinate. The monoglucosylated hederagenin 3-O-beta-D-glucoside is a feeding deterrent of the yellow-striped flea beetle (Phyllotreta nemorum). This Barbarea vulgaris (Yellow rocket) protein is UDP-glycosyltransferase 73C11.